A 311-amino-acid chain; its full sequence is MASSEELTATGYIQHHLQNLTYGKLPAGYVRHNADGTHTELAANTWTFAHTAQEAKDMGFMAVHVDTLGWGIFLALLLGFIFRSAVKKAHTGKPSGLLSFVEFLVEGINSVVKDIFHHKNRLIAPMGLTIFSWVFMMNLMDLIPVDWLPMLAQVVTGDSHTFFKVVPTTDPNATLGMAFTVFALMIMFSIKEKGALGFVKELTCHPFFAPKKLWYLNILLIPVNTILETVALIAKPISLGLRLFGNMYAGEMIFILIALLFSVGLVMGFVGGVLQWAWAVFHILVITLQAFIFMVLTTVYMAMAHDNHDEH.

The next 6 membrane-spanning stretches (helical) occupy residues 62-82 (AVHVDTLGWGIFLALLLGFIF), 123-143 (IAPMGLTIFSWVFMMNLMDLI), 170-190 (DPNATLGMAFTVFALMIMFSI), 213-233 (LWYLNILLIPVNTILETVALI), 253-273 (IFILIALLFSVGLVMGFVGGV), and 276-296 (WAWAVFHILVITLQAFIFMVL).

It belongs to the ATPase A chain family. In terms of assembly, F-type ATPases have 2 components, CF(1) - the catalytic core - and CF(0) - the membrane proton channel. CF(1) has five subunits: alpha(3), beta(3), gamma(1), delta(1), epsilon(1). CF(0) has three main subunits: a(1), b(2) and c(9-12). The alpha and beta chains form an alternating ring which encloses part of the gamma chain. CF(1) is attached to CF(0) by a central stalk formed by the gamma and epsilon chains, while a peripheral stalk is formed by the delta and b chains.

The protein localises to the cell inner membrane. Key component of the proton channel; it plays a direct role in the translocation of protons across the membrane. The polypeptide is ATP synthase subunit a (Saccharophagus degradans (strain 2-40 / ATCC 43961 / DSM 17024)).